The chain runs to 416 residues: GTPase Obg (416 aa).

The Obg domain maps to 1–157; that stretch reads MFQDVLVITV…RRLRLELMLI (157 aa). Disordered regions lie at residues 25-44 and 62-82; these read EKFVPKGGPDGGDGGRGGSV and TYKAEDGEHGRGSQQHGRGGE. Positions 32 to 42 are enriched in gly residues; sequence GPDGGDGGRGG. Residues 63–72 are compositionally biased toward basic and acidic residues; the sequence is YKAEDGEHGR. The OBG-type G domain occupies 158-324; that stretch reads ADVGLVGYPN…LKEALHALVR (167 aa). GTP-binding positions include 164–171, 189–193, 211–214, 277–280, and 305–307; these read GYPNAGKS, FTTLS, DIPG, NKVD, and SAL. Mg(2+)-binding residues include Ser-171 and Thr-191. The OCT domain occupies 336–414; it reads PRKEVQAGVE…IGGLEFEYIP (79 aa).

The protein belongs to the TRAFAC class OBG-HflX-like GTPase superfamily. OBG GTPase family. As to quaternary structure, monomer. Requires Mg(2+) as cofactor.

Its subcellular location is the cytoplasm. Its function is as follows. An essential GTPase which binds GTP, GDP and possibly (p)ppGpp with moderate affinity, with high nucleotide exchange rates and a fairly low GTP hydrolysis rate. Plays a role in control of the cell cycle, stress response, ribosome biogenesis and in those bacteria that undergo differentiation, in morphogenesis control. The sequence is that of GTPase Obg from Thermus thermophilus (strain ATCC BAA-163 / DSM 7039 / HB27).